The chain runs to 372 residues: uncharacterized protein (372 aa).

S-adenosyl-L-methionine contacts are provided by residues Asp202 and 227–229 (GDF).

It belongs to the class I-like SAM-binding methyltransferase superfamily. Cation-independent O-methyltransferase family.

This is an uncharacterized protein from Methanocaldococcus jannaschii (strain ATCC 43067 / DSM 2661 / JAL-1 / JCM 10045 / NBRC 100440) (Methanococcus jannaschii).